The chain runs to 230 residues: Ribulose-phosphate 3-epimerase (230 aa).

S10 contacts substrate. Residues H35, D37, and H68 each coordinate a divalent metal cation. The Proton acceptor role is filled by D37. Residues H68, 146 to 149 (GFGG), 179 to 181 (DGG), and 201 to 202 (GS) each bind substrate. Residue D179 coordinates a divalent metal cation. D179 (proton donor) is an active-site residue.

Belongs to the ribulose-phosphate 3-epimerase family. In terms of assembly, homohexamer. Requires a divalent metal cation as cofactor.

It carries out the reaction D-ribulose 5-phosphate = D-xylulose 5-phosphate. It participates in carbohydrate degradation. Its function is as follows. Catalyzes the reversible epimerization of D-ribulose 5-phosphate to D-xylulose 5-phosphate. The sequence is that of Ribulose-phosphate 3-epimerase from Synechocystis sp. (strain ATCC 27184 / PCC 6803 / Kazusa).